The sequence spans 689 residues: Translation initiation factor IF-2 (689 aa).

The interval 41–109 (DYERVFGGGN…EAPAAEEREA (69 aa)) is disordered. Residues 61–70 (RKGRQKKRRR) show a composition bias toward basic residues. Low complexity predominate over residues 80–94 (RGPRAAAPSRPSRGR). Over residues 96–109 (AAREEAPAAEEREA) the composition is skewed to basic and acidic residues. The tr-type G domain occupies 192 to 361 (EKPPVITVMG…LVVAELEELR (170 aa)). The segment at 201–208 (GHVDHGKT) is G1. 201 to 208 (GHVDHGKT) contributes to the GTP binding site. Residues 226–230 (GITQH) form a G2 region. The interval 247–250 (DTPG) is G3. Residues 247–251 (DTPGH) and 301–304 (NKID) each bind GTP. A G4 region spans residues 301–304 (NKID). A G5 region spans residues 337–339 (SAK).

This sequence belongs to the TRAFAC class translation factor GTPase superfamily. Classic translation factor GTPase family. IF-2 subfamily.

The protein localises to the cytoplasm. In terms of biological role, one of the essential components for the initiation of protein synthesis. Protects formylmethionyl-tRNA from spontaneous hydrolysis and promotes its binding to the 30S ribosomal subunits. Also involved in the hydrolysis of GTP during the formation of the 70S ribosomal complex. The sequence is that of Translation initiation factor IF-2 from Rubrobacter xylanophilus (strain DSM 9941 / JCM 11954 / NBRC 16129 / PRD-1).